Reading from the N-terminus, the 748-residue chain is Catalase-peroxidase (748 aa).

The tryptophyl-tyrosyl-methioninium (Trp-Tyr) (with M-268) cross-link spans 91–242; sequence WHSAGTYRIG…LAAVQMGLIY (152 aa). The active-site Proton acceptor is H92. The interval 194 to 223 is disordered; sequence DRYGKGKGSSSQGEIPADAHRHGQEQARTA. The tryptophyl-tyrosyl-methioninium (Tyr-Met) (with W-91) cross-link spans 242–268; sequence YVNPEGPEGNPDPLAAAHDIRETFARM. Position 283 (H283) interacts with heme b. A disordered region spans residues 288 to 310; the sequence is THGAGDAKHVGREPEGEDMDSQG. Positions 290-301 are enriched in basic and acidic residues; the sequence is GAGDAKHVGREP.

The protein belongs to the peroxidase family. Peroxidase/catalase subfamily. In terms of assembly, homodimer or homotetramer. The cofactor is heme b. Formation of the three residue Trp-Tyr-Met cross-link is important for the catalase, but not the peroxidase activity of the enzyme.

The catalysed reaction is H2O2 + AH2 = A + 2 H2O. It carries out the reaction 2 H2O2 = O2 + 2 H2O. Bifunctional enzyme with both catalase and broad-spectrum peroxidase activity. The sequence is that of Catalase-peroxidase from Herbaspirillum seropedicae.